The following is a 607-amino-acid chain: UvrABC system protein C (607 aa).

The 79-residue stretch at 16–94 (GRPGVYRMFD…IKEWRPPYNI (79 aa)) folds into the GIY-YIG domain. Positions 203 to 238 (NALTDELSGAMEQAASTLDFERAAELRDQISLLRRV) constitute a UVR domain.

The protein belongs to the UvrC family. In terms of assembly, interacts with UvrB in an incision complex.

It localises to the cytoplasm. The UvrABC repair system catalyzes the recognition and processing of DNA lesions. UvrC both incises the 5' and 3' sides of the lesion. The N-terminal half is responsible for the 3' incision and the C-terminal half is responsible for the 5' incision. The chain is UvrABC system protein C from Pseudomonas fluorescens (strain SBW25).